A 232-amino-acid polypeptide reads, in one-letter code: Replicative helicase loading/DNA remodeling protein DnaD (232 aa).

Residues 1 to 98 (MKKQQFIDMQ…QNGIKFEKYS (98 aa)) are N-terminal domain. The DDBH1 stretch occupies residues 1–116 (MKKQQFIDMQ…YEYIQLAQNQ (116 aa)). Positions 99–205 (LQPLWGKLYE…VEQAKIHSQK (107 aa)) are C-terminal domain. A DDBH2 region spans residues 131-200 (TIFEEEFARP…NGLKTVEQAK (70 aa)). Positions 206 to 232 (FRRVQAKQNEPQKEYKRQVPFYNWLEQ) are C-terminal tail.

This sequence belongs to the DnaB/DnaD family. In terms of assembly, the DNA replisome assembles sequentially on oriC in this order; DnaA, DnaD, DnaB, DnaI-DnaC helicase. Homodimer. Homotetramer. Oligomerization in vitro is concentration dependent. Part of the replication restart primosome which assembles in this order; PriA, DnaD then DnaB. The preferred DNA substrate mimics an arrested DNA replication fork with unreplicated lagging strand. Interacts with DnaA, DnaB and PriA. Interaction with DnaB requires DnaD to dimerize.

It localises to the cytoplasm. Recruitment to oriC requires DnaA but not DnaB, DnaC or DnaI and is blocked by SirA. In terms of biological role, required to load replicative helicase DnaC onto replication forks. Binds to a DnaD recognition element (DRE) which has pairs of 5'-TnnT-3' motifs; there is a strong DRE at oriC opposite the DnaA-trios recognized by DnaA. During DNA replication from the origin of replication (oriC) in the DNA replisome, DnaD is required after DnaA, before DnaB and subsequent helicase DnaC loading. A component of the replication restart primosome, which reloads the replicative helicase on sites other than oriC. DnaB, DnaD and DnaI may also be required for a PriA-independent pathway of replication fork restart. DnaB and DnaD work together to allow DnaB access to single-stranded (ss)DNA. Has DNA remodeling activity that converts supercoiled plasmid into an open circular form; DnaD forms scaffolds inside the plasmid DNA. Plasmid relaxation incorporates both wrapping around the DnaD protein scaffold and simultaneous untwisting, no nicking of the DNA is seen. Also converts linear DNA into an open circular form. Disrupts a replicative helicase-DnaI complex. Inhibits the ability of DnaA-ATP to form a helix on DNA; does not disassemble preformed helices in vitro. Binds ssDNA, and replication fork-like substrates, supercoiled plasmid, but not stably to short double-stranded (ds)DNA. DnaD stimulates DnaB DNA-binding activities. DnaB and DnaD are required to load helicase on the repN plasmid origin of replication (oriN). Causes a severe growth defect upon overexpression even in an oriC-independent strain. In Bacillus subtilis (strain 168), this protein is Replicative helicase loading/DNA remodeling protein DnaD.